Here is a 250-residue protein sequence, read N- to C-terminus: Geranylgeranylglyceryl phosphate synthase (250 aa).

Mg(2+)-binding residues include Asp-23 and Ser-52. Sn-glycerol 1-phosphate contacts are provided by residues Tyr-170–Gly-176, Gly-202–Gly-203, and Gly-224–Thr-225.

This sequence belongs to the GGGP/HepGP synthase family. Group II subfamily. Requires Mg(2+) as cofactor.

The protein resides in the cytoplasm. The catalysed reaction is sn-glycerol 1-phosphate + (2E,6E,10E)-geranylgeranyl diphosphate = sn-3-O-(geranylgeranyl)glycerol 1-phosphate + diphosphate. It functions in the pathway membrane lipid metabolism; glycerophospholipid metabolism. Prenyltransferase that catalyzes the transfer of the geranylgeranyl moiety of geranylgeranyl diphosphate (GGPP) to the C3 hydroxyl of sn-glycerol-1-phosphate (G1P). This reaction is the first ether-bond-formation step in the biosynthesis of archaeal membrane lipids. The chain is Geranylgeranylglyceryl phosphate synthase from Methanobrevibacter smithii (strain ATCC 35061 / DSM 861 / OCM 144 / PS).